The chain runs to 2335 residues: Histone-lysine N-methyltransferase ATXR3 (2335 aa).

Disordered regions lie at residues 30–142 (NESK…FKDE), 332–355 (STGNRLKRHGAEPDSIERKHSYAD), 371–556 (CSRS…SSSK), and 902–961 (DQVP…KTDT). Composition is skewed to polar residues over residues 31–46 (ESKTAATTENGHTSIA) and 53–62 (QPANKPSASS). Over residues 65–84 (VKKKRIVKVIRKVVKRRPKQ) the composition is skewed to basic residues. The Nuclear localization signal 1 signature appears at 67 to 74 (KKRIVKVI). Polar residues predominate over residues 97–112 (PPSQVVQLPAESQLQI). Composition is skewed to basic and acidic residues over residues 340-353 (HGAEPDSIERKHSY), 371-390 (CSRSLHSDHYSQHSAERLYR), and 430-452 (WSPHDRSRYHENRDRSPYARERS). Residues 461–475 (HARKRSPRDRRHHDY) show a composition bias toward basic residues. Composition is skewed to basic and acidic residues over residues 485–498 (SPHDRSRPSDRRDY), 507–548 (QSDR…ESNG), and 910–921 (PRAKVRSKERCP). Positions 527–534 (ERRDCQTG) match the Nuclear localization signal 2 motif. Residues 922–932 (SRPARPSPASS) show a composition bias toward low complexity. Positions 941–961 (SHSQSTASTGQDSQGLWKTDT) are enriched in polar residues. The short motif at 1382–1389 (ARRSSAIL) is the Nuclear localization signal 3 element. Positions 1532-1572 (NRKSFSSESDTSSELSDNGKSDNYSSASASESESDIRSEGR) are disordered. Low complexity predominate over residues 1535-1547 (SFSSESDTSSELS). Residues 1765-1904 (KEIESRSDDK…YGEEITFDYN (140 aa)) form the SET domain. Residue cysteine 1868 coordinates Zn(2+). Tyrosine 1903 contacts S-adenosyl-L-methionine. The region spanning 1914–1930 (EASVCLCGSQVCRGSYL) is the Post-SET domain. Zn(2+) contacts are provided by cysteine 1918, cysteine 1920, and cysteine 1925.

It belongs to the class V-like SAM-binding methyltransferase superfamily. Histone-lysine methyltransferase family. TRX/MLL subfamily. Expressed in roots, leaves, stems and inflorescences.

The protein localises to the nucleus. It catalyses the reaction L-lysyl(4)-[histone H3] + 3 S-adenosyl-L-methionine = N(6),N(6),N(6)-trimethyl-L-lysyl(4)-[histone H3] + 3 S-adenosyl-L-homocysteine + 3 H(+). Functionally, histone methyltransferase specifically required for trimethylation of 'Lys-4' of histone H3 (H3K4me3) and is crucial for both sporophyte and gametophyte development. Function as a diurnal 'writer' to counteract the nocturne 'eraser' demethylase activity of JMJ14 thus orchestrating the circadian rhythm of histone modifications (e.g. H3K4me3) and modulating the rhythmic expression of diurnal target genes; this mechanism relies also on the circadian clock oscillators CCA1 and LHY. The protein is Histone-lysine N-methyltransferase ATXR3 of Arabidopsis thaliana (Mouse-ear cress).